Here is a 145-residue protein sequence, read N- to C-terminus: Peptide methionine sulfoxide reductase MsrB (145 aa).

A MsrB domain is found at 6–129; that stretch reads KNERLQQLTD…NSAALRFIPV (124 aa). Cys-118 (nucleophile) is an active-site residue.

It belongs to the MsrB Met sulfoxide reductase family.

The enzyme catalyses L-methionyl-[protein] + [thioredoxin]-disulfide + H2O = L-methionyl-(R)-S-oxide-[protein] + [thioredoxin]-dithiol. This is Peptide methionine sulfoxide reductase MsrB from Listeria monocytogenes serovar 1/2a (strain ATCC BAA-679 / EGD-e).